Reading from the N-terminus, the 1318-residue chain is DNA-directed RNA polymerase subunit beta' (1318 aa).

Zn(2+) is bound by residues C221, C295, C302, and C305.

It belongs to the RNA polymerase beta' chain family. RpoC2 subfamily. In cyanobacteria the RNAP catalytic core is composed of 2 alpha, 1 beta, 1 beta', 1 gamma and 1 omega subunit. When a sigma factor is associated with the core the holoenzyme is formed, which can initiate transcription. The cofactor is Zn(2+).

It catalyses the reaction RNA(n) + a ribonucleoside 5'-triphosphate = RNA(n+1) + diphosphate. Functionally, DNA-dependent RNA polymerase catalyzes the transcription of DNA into RNA using the four ribonucleoside triphosphates as substrates. The chain is DNA-directed RNA polymerase subunit beta' from Synechococcus elongatus (strain ATCC 33912 / PCC 7942 / FACHB-805) (Anacystis nidulans R2).